Here is a 404-residue protein sequence, read N- to C-terminus: Lysophospholipid transporter LplT (404 aa).

The next 12 helical transmembrane spans lie at 16–36, 53–73, 91–111, 139–159, 164–184, 195–213, 227–247, 253–273, 285–305, 310–330, 350–370, and 372–392; these read MIAVLCAQFFSAFGDNALLFA, ILQMAFVATYIVLAPFVGQFA, AGALVICFGFNPFLGYSLVGV, MMEASTIAAILLGSVAGGVLA, GVALGVCALVYAIAVVANMFI, SWRPRAMTGSFFTACLVLW, LFWGAGVTLRFLLVLWVPIAL, ATPTLLNAMVAIGIVVGAGAA, CLPAGVLIGVAVAIFALQHSM, LLLIIIGILGGFFVVPLNALL, GENTAMLLMLGLFSVVVKLGV, and VIAVGVGFGVIFALAIALLWG.

The protein belongs to the major facilitator superfamily. LplT (TC 2.A.1.42) family.

The protein localises to the cell inner membrane. Its function is as follows. Catalyzes the facilitated diffusion of 2-acyl-glycero-3-phosphoethanolamine (2-acyl-GPE) into the cell. The sequence is that of Lysophospholipid transporter LplT from Yersinia enterocolitica serotype O:8 / biotype 1B (strain NCTC 13174 / 8081).